A 162-amino-acid polypeptide reads, in one-letter code: NADH-ubiquinone oxidoreductase subunit 8 (162 aa).

4Fe-4S ferredoxin-type domains are found at residues 54 to 83 (RRYQ…IESE) and 93 to 122 (TRYD…EGPN). 8 residues coordinate [4Fe-4S] cluster: Cys-63, Cys-66, Cys-69, Cys-73, Cys-102, Cys-105, Cys-108, and Cys-112.

This sequence belongs to the complex I 23 kDa subunit family. [4Fe-4S] cluster serves as cofactor.

The protein resides in the mitochondrion. The catalysed reaction is a ubiquinone + NADH + 5 H(+)(in) = a ubiquinol + NAD(+) + 4 H(+)(out). Its function is as follows. Core subunit of the mitochondrial membrane respiratory chain NADH dehydrogenase (Complex I) that is believed to belong to the minimal assembly required for catalysis. Complex I functions in the transfer of electrons from NADH to the respiratory chain. The immediate electron acceptor for the enzyme is believed to be ubiquinone. May donate electrons to ubiquinone. The sequence is that of NADH-ubiquinone oxidoreductase subunit 8 (NAD8) from Reclinomonas americana.